We begin with the raw amino-acid sequence, 1228 residues long: AT-rich interactive domain-containing protein 4B (1228 aa).

2 disordered regions span residues 123–167 (LPLT…DDRK) and 266–307 (KTEL…PFPE). Residues Ser276, Ser295, and Ser296 each carry the phosphoserine modification. Residues 277-305 (EAEEEEEEEDDEKEKEDNSSEEEEEIEPF) are compositionally biased toward acidic residues. The ARID domain maps to 306–398 (PEERENFLQQ…YLYGFEEYCR (93 aa)). Glycyl lysine isopeptide (Lys-Gly) (interchain with G-Cter in SUMO2) cross-links involve residues Lys428 and Lys461. The span at 437–464 (EVNVEDSKNMIPKEETPAEDESERKENI) shows a compositional bias: basic and acidic residues. Disordered regions lie at residues 437 to 466 (EVNV…NIKP), 479 to 525 (PAQS…EQAR), 539 to 606 (RPAD…SDTG), 620 to 802 (LQAS…EEKR), 825 to 1129 (LNNS…RLPK), and 1168 to 1204 (SEVA…SITA). Ser482 carries the phosphoserine modification. The segment covering 483 to 511 (DQEKEANITKLEEKESLEDKDGATARAEE) has biased composition (basic and acidic residues). The span at 546–555 (PKIKHRKKIK) shows a compositional bias: basic residues. A compositionally biased stretch (basic and acidic residues) spans 556-569 (NKLDKEKDRDEKYS). A phosphoserine mark is found at Ser579, Ser581, and Ser588. Basic and acidic residues predominate over residues 596–606 (DLADAKNSDTG). Phosphoserine is present on Ser630. Basic and acidic residues-rich tracts occupy residues 635–667 (ERCA…KEEL) and 691–700 (SPERLRKDVE). Lys664 participates in a covalent cross-link: Glycyl lysine isopeptide (Lys-Gly) (interchain with G-Cter in SUMO2). Residues Ser691 and Ser703 each carry the phosphoserine modification. A compositionally biased stretch (acidic residues) spans 701-713 (AISEDTDFEEEDE). Thr706 carries the phosphothreonine modification. A compositionally biased stretch (basic and acidic residues) spans 721-730 (VKKDTTDKAL). Residues 744–753 (IQTNCLQSGS) show a composition bias toward polar residues. 3 stretches are compositionally biased toward basic and acidic residues: residues 755-765 (GKKEDRTKSKE), 825-843 (LNNS…RKDV), and 911-926 (KPVE…RKTE). Polar residues predominate over residues 927 to 937 (FPSSGSNSVLN). Residue Ser930 is modified to Phosphoserine. Thr942 is subject to Phosphothreonine. Residues 944–965 (ESPSSVTVTETSQQQSSVTVSV) are compositionally biased toward low complexity. Ser945 carries the post-translational modification Phosphoserine. Residues 972–981 (EEVRSIKSET) show a composition bias toward basic and acidic residues. Over residues 1003 to 1017 (SSPAGFNASVSSSSS) the composition is skewed to low complexity. The span at 1046-1064 (KKQKRSHKATVVNNKKKGK) shows a compositional bias: basic residues. Thr1066 carries the phosphothreonine modification. Residues Ser1068, Ser1069, Ser1071, and Ser1075 each carry the phosphoserine modification. Positions 1112–1124 (KNGDKDPDLKEPS) are enriched in basic and acidic residues. The stretch at 1141–1186 (ENMTSAERISILQEKLQEIRKHYLSLKSEVASIDRRRKRLKKKERE) forms a coiled coil. Over residues 1188 to 1204 (AATSSSSSSPSSSSITA) the composition is skewed to low complexity.

In terms of assembly, component of a Sin3A corepressor complex consisting of SIN3A, SAP130, SUDS3/SAP45, SAP180, HDAC1 and HDAC2. Interacts with ARID4A. Interacts with AR.

Its subcellular location is the nucleus. In terms of biological role, acts as a transcriptional repressor. May function in the assembly and/or enzymatic activity of the Sin3A corepressor complex or in mediating interactions between the complex and other regulatory complexes. Plays a role in the regulation of epigenetic modifications at the PWS/AS imprinting center near the SNRPN promoter, where it might function as part of a complex with RB1 and ARID4A. Involved in spermatogenesis, together with ARID4A, where it functions as a transcriptional coactivator for AR (androgen receptor) and enhances expression of genes required for sperm maturation. Regulates expression of the tight junction protein CLDN3 in the testis, which is important for integrity of the blood-testis barrier. Plays a role in myeloid homeostasis where it regulates the histone methylation state of bone marrow cells and expression of various genes involved in hematopoiesis. May function as a leukemia suppressor. The chain is AT-rich interactive domain-containing protein 4B (Arid4b) from Rattus norvegicus (Rat).